The following is a 423-amino-acid chain: Serine--tRNA ligase (423 aa).

231 to 233 (TAE) contributes to the L-serine binding site. 262–264 (RSE) is an ATP binding site. Glu-285 provides a ligand contact to L-serine. 349–352 (EIGS) provides a ligand contact to ATP. Ser-385 provides a ligand contact to L-serine.

The protein belongs to the class-II aminoacyl-tRNA synthetase family. Type-1 seryl-tRNA synthetase subfamily. In terms of assembly, homodimer. The tRNA molecule binds across the dimer.

It localises to the cytoplasm. It carries out the reaction tRNA(Ser) + L-serine + ATP = L-seryl-tRNA(Ser) + AMP + diphosphate + H(+). The enzyme catalyses tRNA(Sec) + L-serine + ATP = L-seryl-tRNA(Sec) + AMP + diphosphate + H(+). The protein operates within aminoacyl-tRNA biosynthesis; selenocysteinyl-tRNA(Sec) biosynthesis; L-seryl-tRNA(Sec) from L-serine and tRNA(Sec): step 1/1. Catalyzes the attachment of serine to tRNA(Ser). Is also able to aminoacylate tRNA(Sec) with serine, to form the misacylated tRNA L-seryl-tRNA(Sec), which will be further converted into selenocysteinyl-tRNA(Sec). This chain is Serine--tRNA ligase, found in Acholeplasma laidlawii (strain PG-8A).